A 276-amino-acid polypeptide reads, in one-letter code: Acetyl-coenzyme A carboxylase carboxyl transferase subunit beta (276 aa).

Positions 24-276 (LWRECSNCHE…NNLLNLHSDK (253 aa)) constitute a CoA carboxyltransferase N-terminal domain. Zn(2+) contacts are provided by C28, C31, C46, and C49. The C4-type zinc-finger motif lies at 28 to 49 (CSNCHEKFYYRRAGVYEVCPNC).

This sequence belongs to the AccD/PCCB family. In terms of assembly, acetyl-CoA carboxylase is a heterohexamer composed of biotin carboxyl carrier protein (AccB), biotin carboxylase (AccC) and two subunits each of ACCase subunit alpha (AccA) and ACCase subunit beta (AccD). The cofactor is Zn(2+).

The protein localises to the cytoplasm. It carries out the reaction N(6)-carboxybiotinyl-L-lysyl-[protein] + acetyl-CoA = N(6)-biotinyl-L-lysyl-[protein] + malonyl-CoA. It participates in lipid metabolism; malonyl-CoA biosynthesis; malonyl-CoA from acetyl-CoA: step 1/1. Component of the acetyl coenzyme A carboxylase (ACC) complex. Biotin carboxylase (BC) catalyzes the carboxylation of biotin on its carrier protein (BCCP) and then the CO(2) group is transferred by the transcarboxylase to acetyl-CoA to form malonyl-CoA. The sequence is that of Acetyl-coenzyme A carboxylase carboxyl transferase subunit beta from Pediococcus pentosaceus (strain ATCC 25745 / CCUG 21536 / LMG 10740 / 183-1w).